A 505-amino-acid chain; its full sequence is Probable folylpolyglutamate synthase (505 aa).

89-92 (GKGS) is an ATP binding site. Residues Ser121, Glu190, and His218 each coordinate Mg(2+). The ATP site is built by Arg332 and Asp346.

It belongs to the folylpolyglutamate synthase family. A monovalent cation is required as a cofactor.

Its subcellular location is the mitochondrion inner membrane. It is found in the mitochondrion matrix. It localises to the cytoplasm. The catalysed reaction is (6S)-5,6,7,8-tetrahydrofolyl-(gamma-L-Glu)(n) + L-glutamate + ATP = (6S)-5,6,7,8-tetrahydrofolyl-(gamma-L-Glu)(n+1) + ADP + phosphate + H(+). Its pathway is cofactor biosynthesis; tetrahydrofolylpolyglutamate biosynthesis. Its function is as follows. Catalyzes conversion of folates to polyglutamate derivatives allowing concentration of folate compounds in the cell and the intracellular retention of these cofactors, which are important substrates for most of the folate-dependent enzymes that are involved in one-carbon transfer reactions involved in purine, pyrimidine and amino acid synthesis. In Schizosaccharomyces pombe (strain 972 / ATCC 24843) (Fission yeast), this protein is Probable folylpolyglutamate synthase (met7).